Here is a 312-residue protein sequence, read N- to C-terminus: Serine/threonine-protein phosphatase CPPED1 (312 aa).

Serine 2 carries the post-translational modification Phosphoserine. The segment at 47–250 (KAWSTGNCDA…AVFSGHYHRN (204 aa)) is catalytic. A divalent metal cation contacts are provided by aspartate 90, asparagine 127, and histidine 246. Residue serine 293 is modified to Phosphoserine.

The protein belongs to the metallophosphoesterase superfamily. CPPED1 family. It depends on a divalent metal cation as a cofactor.

It localises to the cytoplasm. It catalyses the reaction O-phospho-L-seryl-[protein] + H2O = L-seryl-[protein] + phosphate. The enzyme catalyses O-phospho-L-threonyl-[protein] + H2O = L-threonyl-[protein] + phosphate. Protein phosphatase that dephosphorylates AKT family kinase specifically at 'Ser-473', blocking cell cycle progression and promoting cell apoptosis. May play an inhibitory role in glucose uptake by adipocytes. The protein is Serine/threonine-protein phosphatase CPPED1 (Cpped1) of Mus musculus (Mouse).